The primary structure comprises 175 residues: Large ribosomal subunit protein bL17 (175 aa).

Positions G127–A175 are disordered. A compositionally biased stretch (basic and acidic residues) spans A131–A147.

Belongs to the bacterial ribosomal protein bL17 family. As to quaternary structure, part of the 50S ribosomal subunit. Contacts protein L32.

This chain is Large ribosomal subunit protein bL17, found in Streptomyces griseus subsp. griseus (strain JCM 4626 / CBS 651.72 / NBRC 13350 / KCC S-0626 / ISP 5235).